Here is an 897-residue protein sequence, read N- to C-terminus: MARTLPSQYDPFDAEPRWQRFWEEHRFFSPAADGPGKPFSLVLPPPNVTGSLHMGHALCFTLPDVVVRYRRMKGFKTLWLPGTDHASIAVHTVLEKQLRQEGKTRFDLGREAFLERAWAWKERSQDTIRGQLRRLGLSLDWTRESFTLDEKRNRAVVKVFVDLHRKGLIYRGKYLVNWCPASQTAVSDLEVDDKEEKGHLWQLRYPVADSDEFLVVATTRPETMLGDTGVAVHPEDPRYKHLIGREAELPILGRRIVIVGDEAVDREFGTGAVKVTPAHDPNDFEIGKRHGLPMINLLNPNGTYNENAGPYAGLDRFVVRKQVVARAAAEGWLVGIEDHVHNVPYSERGGVPIEPYLSDQWFLDVSGMATRVLEAFDSQNQPAFVPERWGKVYRDWLVRIRPWNISRQLWWGHRIPAWFVAGSEGEYVVAHDEAEAFAVARERYGPDVQLQRDQDVLDTWFSSSLWPFTTLGWPDQTEDLGVFYPNALMSTGFDIIFFWVARMAMMAGEFTGQIPFETVYINGLVRDEKGQKMSKTKGNGIDPIEMMDKYGTDALRYTLVREVTGAGQDVRFDYNRKTGESGAVDASKRFANKIWNASRFVLMNLDELTPAALGAADPGSLTLEDRWILGRLGQTARQIDELLGRYALGEAARSLYEFIWDDFCDWYVELAKPRLEALETRRGAQQVLAAVLDRTLRLLHPWMPHLSEEIWQLLHQPLEVASICVQPFPTGTDLPAEPPAEFALMQQIVRTIRNLRAFAQVPPLRTLPAVRLASRNAEERAAIDATRQAIAHLGRVEQLPLEEVADEHLKQVAVGVAGTVQVMLPLGGLVDVAALAGKLRRSLEKLDKESGVLAARLDNASYLANAPAELVTESRAKLAEQRAQAAILAEQLARLEN.

The short motif at Pro-46–His-56 is the 'HIGH' region element. The 'KMSKS' region motif lies at Lys-532–Thr-536. Lys-535 serves as a coordination point for ATP. A coiled-coil region spans residues Leu-839–Asn-897.

Belongs to the class-I aminoacyl-tRNA synthetase family. ValS type 1 subfamily. As to quaternary structure, monomer.

The protein localises to the cytoplasm. The catalysed reaction is tRNA(Val) + L-valine + ATP = L-valyl-tRNA(Val) + AMP + diphosphate. Functionally, catalyzes the attachment of valine to tRNA(Val). As ValRS can inadvertently accommodate and process structurally similar amino acids such as threonine, to avoid such errors, it has a 'posttransfer' editing activity that hydrolyzes mischarged Thr-tRNA(Val) in a tRNA-dependent manner. The sequence is that of Valine--tRNA ligase from Gloeobacter violaceus (strain ATCC 29082 / PCC 7421).